The chain runs to 227 residues: Cytochrome c oxidase subunit 2 (227 aa).

Residues 1–14 (MAYPMQLGFQDATS) are Mitochondrial intermembrane-facing. The helical transmembrane segment at 15–45 (PIMEELLHFHDHTLMIVFLISSLVLYIISLM) threads the bilayer. Residues 46–59 (LTTKLTHTSTMDAQ) are Mitochondrial matrix-facing. The chain crosses the membrane as a helical span at residues 60–87 (EVETIWTILPAIILILIALPSLRILYMM). Residues 88 to 227 (DEINNPSLTV…YFEKWSASML (140 aa)) are Mitochondrial intermembrane-facing. Cu cation is bound by residues His161, Cys196, Glu198, Cys200, His204, and Met207. Residue Glu198 participates in Mg(2+) binding. Residue Tyr218 is modified to Phosphotyrosine.

This sequence belongs to the cytochrome c oxidase subunit 2 family. As to quaternary structure, component of the cytochrome c oxidase (complex IV, CIV), a multisubunit enzyme composed of 14 subunits. The complex is composed of a catalytic core of 3 subunits MT-CO1, MT-CO2 and MT-CO3, encoded in the mitochondrial DNA, and 11 supernumerary subunits COX4I, COX5A, COX5B, COX6A, COX6B, COX6C, COX7A, COX7B, COX7C, COX8 and NDUFA4, which are encoded in the nuclear genome. The complex exists as a monomer or a dimer and forms supercomplexes (SCs) in the inner mitochondrial membrane with NADH-ubiquinone oxidoreductase (complex I, CI) and ubiquinol-cytochrome c oxidoreductase (cytochrome b-c1 complex, complex III, CIII), resulting in different assemblies (supercomplex SCI(1)III(2)IV(1) and megacomplex MCI(2)III(2)IV(2)). Found in a complex with TMEM177, COA6, COX18, COX20, SCO1 and SCO2. Interacts with TMEM177 in a COX20-dependent manner. Interacts with COX20. Interacts with COX16. It depends on Cu cation as a cofactor.

The protein resides in the mitochondrion inner membrane. The enzyme catalyses 4 Fe(II)-[cytochrome c] + O2 + 8 H(+)(in) = 4 Fe(III)-[cytochrome c] + 2 H2O + 4 H(+)(out). Its function is as follows. Component of the cytochrome c oxidase, the last enzyme in the mitochondrial electron transport chain which drives oxidative phosphorylation. The respiratory chain contains 3 multisubunit complexes succinate dehydrogenase (complex II, CII), ubiquinol-cytochrome c oxidoreductase (cytochrome b-c1 complex, complex III, CIII) and cytochrome c oxidase (complex IV, CIV), that cooperate to transfer electrons derived from NADH and succinate to molecular oxygen, creating an electrochemical gradient over the inner membrane that drives transmembrane transport and the ATP synthase. Cytochrome c oxidase is the component of the respiratory chain that catalyzes the reduction of oxygen to water. Electrons originating from reduced cytochrome c in the intermembrane space (IMS) are transferred via the dinuclear copper A center (CU(A)) of subunit 2 and heme A of subunit 1 to the active site in subunit 1, a binuclear center (BNC) formed by heme A3 and copper B (CU(B)). The BNC reduces molecular oxygen to 2 water molecules using 4 electrons from cytochrome c in the IMS and 4 protons from the mitochondrial matrix. This Boselaphus tragocamelus (Nilgai) protein is Cytochrome c oxidase subunit 2 (MT-CO2).